Reading from the N-terminus, the 944-residue chain is Protein translocase subunit SecA (944 aa).

Residues glutamine 77, 95-99 (GEGKT), and aspartate 484 contribute to the ATP site. The disordered stretch occupies residues 920–944 (EQEKQTKKKKKKKPHDDETTKVKIG). Residues 933-944 (PHDDETTKVKIG) are compositionally biased toward basic and acidic residues.

It belongs to the SecA family. In terms of assembly, monomer and homodimer. Part of the essential Sec protein translocation apparatus which comprises SecA, SecYEG and auxiliary proteins SecDF. Other proteins may also be involved.

Its subcellular location is the cell membrane. The protein localises to the cytoplasm. It catalyses the reaction ATP + H2O + cellular proteinSide 1 = ADP + phosphate + cellular proteinSide 2.. In terms of biological role, part of the Sec protein translocase complex. Interacts with the SecYEG preprotein conducting channel. Has a central role in coupling the hydrolysis of ATP to the transfer of proteins into and across the cell membrane, serving as an ATP-driven molecular motor driving the stepwise translocation of polypeptide chains across the membrane. The protein is Protein translocase subunit SecA of Mycoplasma capricolum subsp. capricolum (strain California kid / ATCC 27343 / NCTC 10154).